A 93-amino-acid polypeptide reads, in one-letter code: Protein translocase subunit SecE (93 aa).

A disordered region spans residues 1 to 33 (MTDALGSIDMPDAEDETREKKARKGGKRGKKGP). Positions 20-33 (KKARKGGKRGKKGP) are enriched in basic residues. The helical transmembrane segment at 64–84 (TVVIVFVVIMIGLVTVIDFGF) threads the bilayer.

This sequence belongs to the SecE/SEC61-gamma family. Component of the Sec protein translocase complex. Heterotrimer consisting of SecY, SecE and SecG subunits. The heterotrimers can form oligomers, although 1 heterotrimer is thought to be able to translocate proteins. Interacts with the ribosome. Interacts with SecDF, and other proteins may be involved. Interacts with SecA.

The protein resides in the cell membrane. Its function is as follows. Essential subunit of the Sec protein translocation channel SecYEG. Clamps together the 2 halves of SecY. May contact the channel plug during translocation. The protein is Protein translocase subunit SecE of Streptomyces virginiae (Streptomyces cinnamonensis).